The sequence spans 93 residues: Integration host factor subunit beta (93 aa).

It belongs to the bacterial histone-like protein family. As to quaternary structure, heterodimer of an alpha and a beta chain.

Its function is as follows. This protein is one of the two subunits of integration host factor, a specific DNA-binding protein that functions in genetic recombination as well as in transcriptional and translational control. This chain is Integration host factor subunit beta, found in Haemophilus ducreyi (strain 35000HP / ATCC 700724).